The following is a 223-amino-acid chain: Peroxynitrite isomerase 1 (223 aa).

Residues 69 to 75 (GVWRGEG) carry the GXWXGXG motif. Positions 186 and 213 each coordinate heme b.

This sequence belongs to the nitrobindin family. As to quaternary structure, homodimer. Requires heme b as cofactor.

It catalyses the reaction peroxynitrite = nitrate. Its pathway is nitrogen metabolism. Heme-binding protein able to scavenge peroxynitrite and to protect free L-tyrosine against peroxynitrite-mediated nitration, by acting as a peroxynitrite isomerase that converts peroxynitrite to nitrate. Therefore, this protein likely plays a role in peroxynitrite sensing and in the detoxification of reactive nitrogen and oxygen species (RNS and ROS, respectively). Is able to bind nitric oxide (NO) in vitro, but may act as a sensor of peroxynitrite levels in vivo. The chain is Peroxynitrite isomerase 1 from Mycobacterium marinum (strain ATCC BAA-535 / M).